An 839-amino-acid polypeptide reads, in one-letter code: Probable beta-glucosidase I (839 aa).

Asn197 carries N-linked (GlcNAc...) asparagine glycosylation. The active site involves Asp225. In terms of domain architecture, PA14 spans 396–556; the sequence is DGKTGFKFRV…TQEELISKAV (161 aa). Asn494 carries an N-linked (GlcNAc...) asparagine glycan.

It belongs to the glycosyl hydrolase 3 family.

Its subcellular location is the secreted. It catalyses the reaction Hydrolysis of terminal, non-reducing beta-D-glucosyl residues with release of beta-D-glucose.. Its pathway is glycan metabolism; cellulose degradation. Functionally, beta-glucosidases are one of a number of cellulolytic enzymes, and catalyze the last step releasing glucose from the inhibitory cellobiose. The polypeptide is Probable beta-glucosidase I (bglI) (Emericella nidulans (strain FGSC A4 / ATCC 38163 / CBS 112.46 / NRRL 194 / M139) (Aspergillus nidulans)).